The sequence spans 279 residues: 3-methyl-2-oxobutanoate hydroxymethyltransferase (279 aa).

Asp44 and Asp83 together coordinate Mg(2+). Residues Asp44–Ser45, Asp83, and Lys112 each bind 3-methyl-2-oxobutanoate. Glu114 serves as a coordination point for Mg(2+). The active-site Proton acceptor is the Glu180.

Belongs to the PanB family. In terms of assembly, homodecamer; pentamer of dimers. The cofactor is Mg(2+).

It is found in the cytoplasm. The catalysed reaction is 3-methyl-2-oxobutanoate + (6R)-5,10-methylene-5,6,7,8-tetrahydrofolate + H2O = 2-dehydropantoate + (6S)-5,6,7,8-tetrahydrofolate. It participates in cofactor biosynthesis; (R)-pantothenate biosynthesis; (R)-pantoate from 3-methyl-2-oxobutanoate: step 1/2. Its function is as follows. Catalyzes the reversible reaction in which hydroxymethyl group from 5,10-methylenetetrahydrofolate is transferred onto alpha-ketoisovalerate to form ketopantoate. In Chloroflexus aggregans (strain MD-66 / DSM 9485), this protein is 3-methyl-2-oxobutanoate hydroxymethyltransferase.